A 459-amino-acid polypeptide reads, in one-letter code: Plasma alpha-L-fucosidase (459 aa).

A signal peptide spans 1–23 (MRLGLLMFLPLLLLATRYRAVTA). N-linked (GlcNAc...) asparagine glycans are attached at residues Asn163 and Asn231. Ser293 is subject to Phosphoserine. Asn369 carries an N-linked (GlcNAc...) asparagine glycan.

Belongs to the glycosyl hydrolase 29 family. Homotetramer.

The protein localises to the secreted. It catalyses the reaction an alpha-L-fucoside + H2O = L-fucose + an alcohol. Functionally, alpha-L-fucosidase is responsible for hydrolyzing the alpha-1,6-linked fucose joined to the reducing-end N-acetylglucosamine of the carbohydrate moieties of glycoproteins. The protein is Plasma alpha-L-fucosidase (Fuca2) of Rattus norvegicus (Rat).